The sequence spans 417 residues: Aromatic-amino-acid aminotransferase 1 (417 aa).

Position 258 is an N6-(pyridoxal phosphate)lysine (lysine 258).

This sequence belongs to the class-I pyridoxal-phosphate-dependent aminotransferase family. Homodimer. The cofactor is pyridoxal 5'-phosphate.

The catalysed reaction is an aromatic L-alpha-amino acid + 2-oxoglutarate = an aromatic oxo-acid + L-glutamate. Functionally, catalyzes the transamination of phenylalanine, tyrosine and tryptophan. Shows virtually no activity towards aspartic acid, alanine, valine or isoleucine. In Thermococcus litoralis (strain ATCC 51850 / DSM 5473 / JCM 8560 / NS-C), this protein is Aromatic-amino-acid aminotransferase 1.